We begin with the raw amino-acid sequence, 398 residues long: Stabilizer of axonemal microtubules 2 (398 aa).

Mn stretches follow at residues 114 to 126 (STTF…PQEI), 148 to 162 (ITSH…QLEL), 248 to 260 (NSTS…PYQA), 282 to 296 (KSIM…ESCR), 316 to 328 (LSTF…PHEL), and 350 to 364 (VTMY…RQEI).

The protein belongs to the FAM154 family.

This Homo sapiens (Human) protein is Stabilizer of axonemal microtubules 2 (SAXO2).